The sequence spans 228 residues: 2-C-methyl-D-erythritol 4-phosphate cytidylyltransferase (228 aa).

It belongs to the IspD/TarI cytidylyltransferase family. IspD subfamily.

It catalyses the reaction 2-C-methyl-D-erythritol 4-phosphate + CTP + H(+) = 4-CDP-2-C-methyl-D-erythritol + diphosphate. It participates in isoprenoid biosynthesis; isopentenyl diphosphate biosynthesis via DXP pathway; isopentenyl diphosphate from 1-deoxy-D-xylulose 5-phosphate: step 2/6. Functionally, catalyzes the formation of 4-diphosphocytidyl-2-C-methyl-D-erythritol from CTP and 2-C-methyl-D-erythritol 4-phosphate (MEP). The polypeptide is 2-C-methyl-D-erythritol 4-phosphate cytidylyltransferase (Geobacillus thermodenitrificans (strain NG80-2)).